A 105-amino-acid polypeptide reads, in one-letter code: Small ribosomal subunit protein uS10 (105 aa).

Belongs to the universal ribosomal protein uS10 family. Part of the 30S ribosomal subunit.

In terms of biological role, involved in the binding of tRNA to the ribosomes. This chain is Small ribosomal subunit protein uS10, found in Chlamydia pneumoniae (Chlamydophila pneumoniae).